The following is a 168-amino-acid chain: MDIKEHAEEVWFIVMLVLVLIFFSWNVYYLSTGKSFSLDYGLPTYSGLPEQAQKAVQYFDSHPPSPGQYSEVINGMLVVNLTATQYKWTPDLIVVNKSEPVVLIINSPQVDTGFYLRTPDGVINLNNVAGITSYAYFVINQPGNYTWRDAEYAGYNSSYMTGTVEVVG.

Residues 9 to 31 traverse the membrane as a helical segment; that stretch reads EVWFIVMLVLVLIFFSWNVYYLS.

The protein belongs to the cytochrome c oxidase subunit 2 family.

The protein resides in the cell membrane. The catalysed reaction is 2 a quinol + O2 = 2 a quinone + 2 H2O. In terms of biological role, the terminal oxidase is the component of the respiratory chain that catalyzes the reduction of oxygen to water. Subunits 1-3 form the functional core of the enzyme complex. Its function is as follows. Subunit 2 transfers the electrons from caldariella quinol to the bimetallic center of the catalytic subunit 1 that is formed by heme A3 and Cu(B). The polypeptide is Quinol oxidase subunit 2 (soxA) (Sulfolobus acidocaldarius (strain ATCC 33909 / DSM 639 / JCM 8929 / NBRC 15157 / NCIMB 11770)).